Reading from the N-terminus, the 201-residue chain is dITP/XTP pyrophosphatase (201 aa).

A substrate-binding site is contributed by 9-14 (TRNSGK). E42 and D71 together coordinate Mg(2+). D71 serves as the catalytic Proton acceptor. Residues S72, 156–159 (FGYD), K178, and 183–184 (HR) contribute to the substrate site.

The protein belongs to the HAM1 NTPase family. In terms of assembly, homodimer. Mg(2+) is required as a cofactor.

The catalysed reaction is XTP + H2O = XMP + diphosphate + H(+). It catalyses the reaction dITP + H2O = dIMP + diphosphate + H(+). The enzyme catalyses ITP + H2O = IMP + diphosphate + H(+). Functionally, pyrophosphatase that catalyzes the hydrolysis of nucleoside triphosphates to their monophosphate derivatives, with a high preference for the non-canonical purine nucleotides XTP (xanthosine triphosphate), dITP (deoxyinosine triphosphate) and ITP. Seems to function as a house-cleaning enzyme that removes non-canonical purine nucleotides from the nucleotide pool, thus preventing their incorporation into DNA/RNA and avoiding chromosomal lesions. In Lactococcus lactis subsp. lactis (strain IL1403) (Streptococcus lactis), this protein is dITP/XTP pyrophosphatase (ynbD).